A 296-amino-acid polypeptide reads, in one-letter code: Cell surface glycoprotein CD200 receptor 3 (296 aa).

Positions 1-25 are cleaved as a signal peptide; the sequence is MHALGRTLALMLLIFITILVPESSC. Over 26-245 the chain is Extracellular; sequence SVKGREEIPP…NRGTTSILPS (220 aa). Residues 48-162 enclose the Ig-like V-type domain; it reads PDGVGVTMEI…GIFQERHSIQ (115 aa). Cys75 and Cys146 are disulfide-bonded. One can recognise an Ig-like C2-type domain in the interval 151–232; that stretch reads TDGIFQERHS…SHLTDNWILS (82 aa). Residues Asn167 and Asn199 are each glycosylated (N-linked (GlcNAc...) asparagine). A disulfide bond links Cys172 and Cys220. A helical membrane pass occupies residues 246-266; that stretch reads LLSILYVKLAVTVLIVGFAFF. The Cytoplasmic portion of the chain corresponds to 267–296; sequence QKRNYFSSRDLVFMKERRSKRSVWQREALG.

The protein belongs to the CD200R family. As to quaternary structure, isoform 3 interacts with TYROBP. Isoform 8 does not interact with TYROBP. As to expression, expressed in uterus and bone marrow-derived mast cells (at protein level). Expressed in uterus, spleen, bone marrow-derived dendritic, basophil and mast cells. Expressed in the lung of N.brasiliensis-infected mice. Weakly expressed in brain, testis, lung and thymus.

It localises to the membrane. In terms of biological role, according to PubMed:15187158 isoform 4 is a receptor for the CD200 cell surface glycoprotein. According to PubMed:16081818 isoform 4 is not a receptor for the CD200/OX2 cell surface glycoprotein. Isoform 1, isoform 2 and isoform 3 are involved in the recruitment or surface expression of the TYROBP receptor. Isoform 6, isoform 7 and isoform 8 are not involved in the recruitment or surface expression of the TYROBP receptor. This is Cell surface glycoprotein CD200 receptor 3 (Cd200r3) from Mus musculus (Mouse).